The chain runs to 121 residues: Putative membrane protein insertion efficiency factor (121 aa).

This sequence belongs to the UPF0161 family.

Its subcellular location is the cell inner membrane. Could be involved in insertion of integral membrane proteins into the membrane. The polypeptide is Putative membrane protein insertion efficiency factor (Rhodopseudomonas palustris (strain HaA2)).